A 648-amino-acid polypeptide reads, in one-letter code: Threonine--tRNA ligase (648 aa).

Residues 1–61 form the TGS domain; the sequence is MIKITFPNTS…NENASVKLYK (61 aa). Residues 243-542 are catalytic; the sequence is DHRRIGKEME…MIEHTGGKFP (300 aa). Positions 338, 389, and 519 each coordinate Zn(2+).

It belongs to the class-II aminoacyl-tRNA synthetase family. In terms of assembly, homodimer. The cofactor is Zn(2+).

It is found in the cytoplasm. The catalysed reaction is tRNA(Thr) + L-threonine + ATP = L-threonyl-tRNA(Thr) + AMP + diphosphate + H(+). Functionally, catalyzes the attachment of threonine to tRNA(Thr) in a two-step reaction: L-threonine is first activated by ATP to form Thr-AMP and then transferred to the acceptor end of tRNA(Thr). Also edits incorrectly charged L-seryl-tRNA(Thr). The polypeptide is Threonine--tRNA ligase (Azobacteroides pseudotrichonymphae genomovar. CFP2).